Reading from the N-terminus, the 253-residue chain is Probable transcriptional regulatory protein AM1_1847 (253 aa).

Belongs to the TACO1 family.

It localises to the cytoplasm. This is Probable transcriptional regulatory protein AM1_1847 from Acaryochloris marina (strain MBIC 11017).